Consider the following 229-residue polypeptide: 2,3-bisphosphoglycerate-dependent phosphoglycerate mutase (229 aa).

Substrate-binding positions include 7–14 (RHGQSEWN), 20–21 (TG), Arg-59, 86–89 (ERHY), Lys-97, 113–114 (RR), and 182–183 (GN). Residue His-8 is the Tele-phosphohistidine intermediate of the active site. Residue Glu-86 is the Proton donor/acceptor of the active site.

The protein belongs to the phosphoglycerate mutase family. BPG-dependent PGAM subfamily.

The enzyme catalyses (2R)-2-phosphoglycerate = (2R)-3-phosphoglycerate. It participates in carbohydrate degradation; glycolysis; pyruvate from D-glyceraldehyde 3-phosphate: step 3/5. Functionally, catalyzes the interconversion of 2-phosphoglycerate and 3-phosphoglycerate. This is 2,3-bisphosphoglycerate-dependent phosphoglycerate mutase from Listeria welshimeri serovar 6b (strain ATCC 35897 / DSM 20650 / CCUG 15529 / CIP 8149 / NCTC 11857 / SLCC 5334 / V8).